The chain runs to 275 residues: Bis(5'-nucleosyl)-tetraphosphatase, symmetrical (275 aa).

The protein belongs to the Ap4A hydrolase family.

The enzyme catalyses P(1),P(4)-bis(5'-adenosyl) tetraphosphate + H2O = 2 ADP + 2 H(+). Hydrolyzes diadenosine 5',5'''-P1,P4-tetraphosphate to yield ADP. This chain is Bis(5'-nucleosyl)-tetraphosphatase, symmetrical, found in Haemophilus influenzae (strain PittEE).